We begin with the raw amino-acid sequence, 41 residues long: Photosystem II reaction center protein Y (41 aa).

Residue M1 is modified to N-formylmethionine. Residues 1–4 (MDWR) lie on the Lumenal side of the membrane. The helical transmembrane segment at 5–23 (VLVVLLPVLLAAGWAVRNI) threads the bilayer. Residues 24 to 41 (LPYAVKQVQKLLQKAKAA) are Cytoplasmic-facing.

Belongs to the PsbY family. In terms of assembly, PSII is composed of 1 copy each of membrane proteins PsbA, PsbB, PsbC, PsbD, PsbE, PsbF, PsbH, PsbI, PsbJ, PsbK, PsbL, PsbM, PsbT, PsbX, PsbY, PsbZ, Psb30/Ycf12, peripheral proteins PsbO, CyanoQ (PsbQ), PsbU, PsbV and a large number of cofactors. It forms dimeric complexes. This protein is only loosely associated with PSII, and is not often found in crystals. Found on the exterior of the PSII dimer, near cytochrome b559 (psbE and psbF). PSII binds multiple chlorophylls, carotenoids and specific lipids. is required as a cofactor.

Its subcellular location is the cellular thylakoid membrane. Functionally, loosely associated component of the core of photosystem II, it is not always seen in crystals. PSII is a light-driven water plastoquinone oxidoreductase, using light energy to abstract electrons from H(2)O, generating a proton gradient subsequently used for ATP formation. This chain is Photosystem II reaction center protein Y, found in Thermosynechococcus vestitus (strain NIES-2133 / IAM M-273 / BP-1).